We begin with the raw amino-acid sequence, 242 residues long: MNTSTKLICQKLFAEMLCSCIFGFAVYSAILNTKASNSSISSTTVGLTVCFSSISLIYTFCDHSVAHFNPAITIAAICTGKLDILLGIGYVIAQLIGFILATLLTVVCFPYGYLKTMEFIASARISDDISTVNLFFTEFILSFILVFIAFEVGINAIREPGVTLFVGIKQIDRSKFAPLTIGITLGFLAFLASTTSGGAFNPGIVWGPAIMGGNFDDFVIYIISELSGGLLGAFIQVFLLFK.

The Cytoplasmic portion of the chain corresponds to 1–11 (MNTSTKLICQK). A helical transmembrane segment spans residues 12–32 (LFAEMLCSCIFGFAVYSAILN). Over 33–39 (TKASNSS) the chain is Extracellular. A helical transmembrane segment spans residues 40–60 (ISSTTVGLTVCFSSISLIYTF). Topologically, residues 61 to 83 (CDHSVAHFNPAITIAAICTGKLD) are cytoplasmic. Positions 69–71 (NPA) match the NPA motif. A helical membrane pass occupies residues 84 to 104 (ILLGIGYVIAQLIGFILATLL). Topologically, residues 105–133 (TVVCFPYGYLKTMEFIASARISDDISTVN) are extracellular. Residues 134–154 (LFFTEFILSFILVFIAFEVGI) traverse the membrane as a helical segment. At 155–175 (NAIREPGVTLFVGIKQIDRSK) the chain is on the cytoplasmic side. A helical transmembrane segment spans residues 176–196 (FAPLTIGITLGFLAFLASTTS). The Extracellular segment spans residues 197-217 (GGAFNPGIVWGPAIMGGNFDD). The short motif at 201–203 (NPG) is the NPG element. A helical membrane pass occupies residues 218–238 (FVIYIISELSGGLLGAFIQVF). Residues 239-242 (LLFK) lie on the Cytoplasmic side of the membrane.

It belongs to the MIP/aquaporin (TC 1.A.8) family.

Its subcellular location is the cell membrane. Water channel required to facilitate the transport of water across membranes. Involved in osmotolerance. The chain is Aquaporin (AQP) from Enterocytozoon bieneusi (strain H348) (Microsporidian parasite).